A 238-amino-acid polypeptide reads, in one-letter code: Protein lifeguard 4 (238 aa).

Residues 1-38 lie on the Cytoplasmic side of the membrane; it reads MADTDPGYPRSSIEDDFNYGSCVASASVHIRMAFLRKV. A helical transmembrane segment spans residues 39-59; sequence YSILSLQVLLTTVTSALFLYF. Over 60–68 the chain is Lumenal; it reads QALRTFVHE. The helical transmembrane segment at 69-89 threads the bilayer; it reads SPALIVVFALGSLGLIFALTL. The Cytoplasmic segment spans residues 90–97; the sequence is HRHTHPLN. A helical transmembrane segment spans residues 98–118; that stretch reads LYLLFAFTLSESLAVAAVVTF. The Lumenal portion of the chain corresponds to 119-120; the sequence is YD. The helical transmembrane segment at 121-141 threads the bilayer; the sequence is VYLVLQAFIMTTAVFLGLTAY. The Cytoplasmic segment spans residues 142–151; it reads TLQSKRDFTK. A helical transmembrane segment spans residues 152–172; it reads FGAGLFAGLWILCLAGFLKLF. The Lumenal portion of the chain corresponds to 173-175; sequence FYS. The chain crosses the membrane as a helical span at residues 176–196; sequence ETMELVLASLGALLFCGFIIY. Over 197–208 the chain is Cytoplasmic; it reads DTHSLMHRLSPE. Residues 209–229 constitute an intramembrane region (helical); sequence EYVIAAISLYMDIINLFLHLL. The Cytoplasmic segment spans residues 230 to 238; that stretch reads KFLEAVNKK.

The protein belongs to the BI1 family. LFG subfamily. As to quaternary structure, interacts with ITPR3.

It localises to the golgi apparatus membrane. Its function is as follows. Anti-apoptotic protein which can inhibit apoptosis induced by intrinsic and extrinsic apoptotic stimuli. Can modulate both capacitative Ca2+ entry and inositol 1,4,5-trisphosphate (IP3)-mediated Ca2+ release. The protein is Protein lifeguard 4 (Tmbim4) of Mus musculus (Mouse).